The sequence spans 72 residues: Crustacean hyperglycemic hormone (72 aa).

Glutamine 1 is modified (pyrrolidone carboxylic acid). Residue phenylalanine 3 is modified to D-phenylalanine; in form CHH-II. Disulfide bonds link cysteine 7–cysteine 43, cysteine 23–cysteine 39, and cysteine 26–cysteine 52. Valine 72 bears the Valine amide mark.

Stereoinversion of L-Phe (in CHH-I) to D-Phe (in CHH-II) the two forms are present in a ratio 3:1 (CHH-I/CHH-II). Produced by the medulla terminalis X-organ in the eyestalks and transported to the sinus gland where they are stored and released.

Its subcellular location is the secreted. Functionally, hormone found in the sinus gland of isopods and decapods which controls the blood sugar level. Has a secretagogue action over the amylase released from the midgut gland. May act as a stress hormone and may be involved in the control of molting and reproduction. This chain is Crustacean hyperglycemic hormone, found in Procambarus bouvieri (Mexican crayfish).